We begin with the raw amino-acid sequence, 181 residues long: Crossover junction endodeoxyribonuclease RuvC (181 aa).

Residues D7, E67, and D139 contribute to the active site. D7, E67, and D139 together coordinate Mg(2+).

The protein belongs to the RuvC family. In terms of assembly, homodimer which binds Holliday junction (HJ) DNA. The HJ becomes 2-fold symmetrical on binding to RuvC with unstacked arms; it has a different conformation from HJ DNA in complex with RuvA. In the full resolvosome a probable DNA-RuvA(4)-RuvB(12)-RuvC(2) complex forms which resolves the HJ. The cofactor is Mg(2+).

It is found in the cytoplasm. It carries out the reaction Endonucleolytic cleavage at a junction such as a reciprocal single-stranded crossover between two homologous DNA duplexes (Holliday junction).. The RuvA-RuvB-RuvC complex processes Holliday junction (HJ) DNA during genetic recombination and DNA repair. Endonuclease that resolves HJ intermediates. Cleaves cruciform DNA by making single-stranded nicks across the HJ at symmetrical positions within the homologous arms, yielding a 5'-phosphate and a 3'-hydroxyl group; requires a central core of homology in the junction. The consensus cleavage sequence is 5'-(A/T)TT(C/G)-3'. Cleavage occurs on the 3'-side of the TT dinucleotide at the point of strand exchange. HJ branch migration catalyzed by RuvA-RuvB allows RuvC to scan DNA until it finds its consensus sequence, where it cleaves and resolves the cruciform DNA. The protein is Crossover junction endodeoxyribonuclease RuvC of Ralstonia pickettii (strain 12J).